The following is a 288-amino-acid chain: Bifunctional protein FolD (288 aa).

166-168 provides a ligand contact to NADP(+); that stretch reads GRS.

The protein belongs to the tetrahydrofolate dehydrogenase/cyclohydrolase family. As to quaternary structure, homodimer.

It carries out the reaction (6R)-5,10-methylene-5,6,7,8-tetrahydrofolate + NADP(+) = (6R)-5,10-methenyltetrahydrofolate + NADPH. The catalysed reaction is (6R)-5,10-methenyltetrahydrofolate + H2O = (6R)-10-formyltetrahydrofolate + H(+). It participates in one-carbon metabolism; tetrahydrofolate interconversion. In terms of biological role, catalyzes the oxidation of 5,10-methylenetetrahydrofolate to 5,10-methenyltetrahydrofolate and then the hydrolysis of 5,10-methenyltetrahydrofolate to 10-formyltetrahydrofolate. The chain is Bifunctional protein FolD from Levilactobacillus brevis (strain ATCC 367 / BCRC 12310 / CIP 105137 / JCM 1170 / LMG 11437 / NCIMB 947 / NCTC 947) (Lactobacillus brevis).